A 155-amino-acid chain; its full sequence is Transcriptional repressor NrdR (155 aa).

Residues 1-11 (MECPNCHQNAS) are compositionally biased toward polar residues. A disordered region spans residues 1–22 (MECPNCHQNASRVIDSRPSDEN). A zinc finger lies at 3-34 (CPNCHQNASRVIDSRPSDENRAIRRRRECENC). Residues 49–139 (LLVIKNDGTR…IYREFKDMSS (91 aa)) form the ATP-cone domain.

It belongs to the NrdR family. Zn(2+) is required as a cofactor.

Negatively regulates transcription of bacterial ribonucleotide reductase nrd genes and operons by binding to NrdR-boxes. The polypeptide is Transcriptional repressor NrdR (Lactobacillus helveticus (strain DPC 4571)).